We begin with the raw amino-acid sequence, 283 residues long: Putative pyruvate, phosphate dikinase regulatory protein (283 aa).

156–163 (GLSRAGKT) contacts ADP.

It belongs to the pyruvate, phosphate/water dikinase regulatory protein family. PDRP subfamily.

The enzyme catalyses N(tele)-phospho-L-histidyl/L-threonyl-[pyruvate, phosphate dikinase] + ADP = N(tele)-phospho-L-histidyl/O-phospho-L-threonyl-[pyruvate, phosphate dikinase] + AMP + H(+). It carries out the reaction N(tele)-phospho-L-histidyl/O-phospho-L-threonyl-[pyruvate, phosphate dikinase] + phosphate + H(+) = N(tele)-phospho-L-histidyl/L-threonyl-[pyruvate, phosphate dikinase] + diphosphate. Bifunctional serine/threonine kinase and phosphorylase involved in the regulation of the pyruvate, phosphate dikinase (PPDK) by catalyzing its phosphorylation/dephosphorylation. This is Putative pyruvate, phosphate dikinase regulatory protein from Desulfotalea psychrophila (strain LSv54 / DSM 12343).